A 57-amino-acid polypeptide reads, in one-letter code: Andropin (57 aa).

A signal peptide spans 1–23 (MKYFVVLVVLALILAITVDPSDA).

The protein belongs to the andropin family. As to expression, ejaculatory duct of adult males.

It localises to the secreted. Male-specific peptide with moderate activity against Gram-positive bacteria. This is Andropin (Anp) from Drosophila sechellia (Fruit fly).